The primary structure comprises 927 residues: Transmembrane protein 132 homolog (927 aa).

A signal peptide spans 1–18 (MLKKLWICISCIVTTALS). The helical transmembrane segment at 749–769 (FHIFVLTIIGLIILFLFISFV) threads the bilayer. The interval 789-842 (LSSSSGSNSRQEETNEWVWLSQPQPPSSTISSGYSGNKSTAERQSSNGDDPSRT) is disordered. Residues 817–842 (TISSGYSGNKSTAERQSSNGDDPSRT) are compositionally biased toward polar residues.

This sequence belongs to the TMEM132 family. As to quaternary structure, interacts with gex-3. In terms of tissue distribution, specifically expressed in neurons.

The protein resides in the membrane. Regulates neuronal morphology via inhibition of the WAVE regulatory complex (WCR), a complex that controls F-actin cytoskeletal dynamics. This Caenorhabditis elegans protein is Transmembrane protein 132 homolog.